A 304-amino-acid polypeptide reads, in one-letter code: UDP-N-acetylenolpyruvoylglucosamine reductase (304 aa).

The FAD-binding PCMH-type domain occupies 28 to 193 (KTGGPADYLA…LTATFALTPG (166 aa)). Arg172 is a catalytic residue. Catalysis depends on Ser222, which acts as the Proton donor. Glu292 is a catalytic residue.

The protein belongs to the MurB family. FAD is required as a cofactor.

The protein localises to the cytoplasm. It catalyses the reaction UDP-N-acetyl-alpha-D-muramate + NADP(+) = UDP-N-acetyl-3-O-(1-carboxyvinyl)-alpha-D-glucosamine + NADPH + H(+). It functions in the pathway cell wall biogenesis; peptidoglycan biosynthesis. Its function is as follows. Cell wall formation. In Levilactobacillus brevis (strain ATCC 367 / BCRC 12310 / CIP 105137 / JCM 1170 / LMG 11437 / NCIMB 947 / NCTC 947) (Lactobacillus brevis), this protein is UDP-N-acetylenolpyruvoylglucosamine reductase.